We begin with the raw amino-acid sequence, 187 residues long: Flavin prenyltransferase UbiX (187 aa).

Residues 9-11, threonine 34, 88-91, and arginine 123 contribute to the FMN site; these read GSS and SISS. Dimethylallyl phosphate is bound by residues tyrosine 153 and lysine 169.

It belongs to the UbiX/PAD1 family.

It carries out the reaction dimethylallyl phosphate + FMNH2 = prenylated FMNH2 + phosphate. In terms of biological role, flavin prenyltransferase that catalyzes the synthesis of the prenylated FMN cofactor (prenyl-FMN) for 4-hydroxy-3-polyprenylbenzoic acid decarboxylase UbiD. The prenyltransferase is metal-independent and links a dimethylallyl moiety from dimethylallyl monophosphate (DMAP) to the flavin N5 and C6 atoms of FMN. The protein is Flavin prenyltransferase UbiX of Campylobacter jejuni subsp. jejuni serotype O:2 (strain ATCC 700819 / NCTC 11168).